Here is a 398-residue protein sequence, read N- to C-terminus: Succinyl-diaminopimelate desuccinylase (398 aa).

Residue His-73 coordinates Zn(2+). Asp-75 is an active-site residue. Asp-106 is a Zn(2+) binding site. Glu-140 (proton acceptor) is an active-site residue. Positions 141, 169, and 366 each coordinate Zn(2+).

Belongs to the peptidase M20A family. DapE subfamily. As to quaternary structure, homodimer. Zn(2+) serves as cofactor. Requires Co(2+) as cofactor.

The catalysed reaction is N-succinyl-(2S,6S)-2,6-diaminopimelate + H2O = (2S,6S)-2,6-diaminopimelate + succinate. It functions in the pathway amino-acid biosynthesis; L-lysine biosynthesis via DAP pathway; LL-2,6-diaminopimelate from (S)-tetrahydrodipicolinate (succinylase route): step 3/3. Its function is as follows. Catalyzes the hydrolysis of N-succinyl-L,L-diaminopimelic acid (SDAP), forming succinate and LL-2,6-diaminopimelate (DAP), an intermediate involved in the bacterial biosynthesis of lysine and meso-diaminopimelic acid, an essential component of bacterial cell walls. In Agrobacterium fabrum (strain C58 / ATCC 33970) (Agrobacterium tumefaciens (strain C58)), this protein is Succinyl-diaminopimelate desuccinylase.